The following is a 206-amino-acid chain: Large ribosomal subunit protein uL4 (206 aa).

The interval 55–80 (AFVSGGGAKPWRQKGTGRARSGSNRS) is disordered.

This sequence belongs to the universal ribosomal protein uL4 family. As to quaternary structure, part of the 50S ribosomal subunit.

In terms of biological role, one of the primary rRNA binding proteins, this protein initially binds near the 5'-end of the 23S rRNA. It is important during the early stages of 50S assembly. It makes multiple contacts with different domains of the 23S rRNA in the assembled 50S subunit and ribosome. Functionally, forms part of the polypeptide exit tunnel. This is Large ribosomal subunit protein uL4 from Nitratidesulfovibrio vulgaris (strain DSM 19637 / Miyazaki F) (Desulfovibrio vulgaris).